The primary structure comprises 194 residues: Endo-1,4-beta-xylanase (194 aa).

Gly-1 carries the N-acetylglycine modification. Positions 1–191 constitute a GH11 domain; that stretch reads GTTPNSEGWH…SSGYARITVA (191 aa). Glu-86 serves as the catalytic Nucleophile. An intrachain disulfide couples Cys-110 to Cys-154. Glu-178 functions as the Proton donor in the catalytic mechanism.

Belongs to the glycosyl hydrolase 11 (cellulase G) family.

The catalysed reaction is Endohydrolysis of (1-&gt;4)-beta-D-xylosidic linkages in xylans.. It participates in glycan degradation; xylan degradation. This Byssochlamys spectabilis (Paecilomyces variotii) protein is Endo-1,4-beta-xylanase.